The following is a 428-amino-acid chain: Enolase (428 aa).

Gln-162 provides a ligand contact to (2R)-2-phosphoglycerate. Catalysis depends on Glu-204, which acts as the Proton donor. Mg(2+) is bound by residues Asp-241, Glu-283, and Asp-310. Lys-335, Arg-364, Ser-365, and Lys-386 together coordinate (2R)-2-phosphoglycerate. Catalysis depends on Lys-335, which acts as the Proton acceptor.

This sequence belongs to the enolase family. It depends on Mg(2+) as a cofactor.

The protein resides in the cytoplasm. The protein localises to the secreted. Its subcellular location is the cell surface. It carries out the reaction (2R)-2-phosphoglycerate = phosphoenolpyruvate + H2O. It participates in carbohydrate degradation; glycolysis; pyruvate from D-glyceraldehyde 3-phosphate: step 4/5. Catalyzes the reversible conversion of 2-phosphoglycerate (2-PG) into phosphoenolpyruvate (PEP). It is essential for the degradation of carbohydrates via glycolysis. The chain is Enolase from Rhodococcus opacus (strain B4).